A 68-amino-acid chain; its full sequence is uncharacterized protein (68 aa).

The signal sequence occupies residues 1–15 (MTIIFLICLDASTQS). Residues 14–68 (QSTTNNSINNNNNNNNNNNNNNNNNNNNNNNNNNNNNNNNNNNNNNSKVFDFNIF) form a disordered region. N-linked (GlcNAc...) asparagine glycans are attached at residues N18 and N58. The segment covering 22–59 (NNNNNNNNNNNNNNNNNNNNNNNNNNNNNNNNNNNNNN) has biased composition (low complexity).

The protein resides in the secreted. This is an uncharacterized protein from Dictyostelium discoideum (Social amoeba).